The chain runs to 340 residues: MTQAQTAATVQPDAIPVAAPVSQRWRVADVVALFELPFNDLLFRAQQVHREHFDANAVQLSTLLSIKTGGCEEDCGYCSQSSHHDTGLKAEKLMDVDAVLDAARAAKANGASRFCMGAAWRNPKERHMPALTEMVRGVKELGLETCMTLGMLEDEQAQELASAGLDYYNHNLDTSPEFYGQVISTRTYQDRLDTLDRVRDAGINVCCGGIIGMGESRRERAGLISQLANLNPYPDSVPINNLVAIEGTPLEGTAPLDPFEFVRTIAVARITMPKAVVRLSAGREQLDDGLQAMCFLAGANSMFYGDQLLTTSNPQSQKDRALFERLGIRSSDADAMSANA.

A Radical SAM core domain is found at 56-283; the sequence is NAVQLSTLLS…KAVVRLSAGR (228 aa). 3 residues coordinate [4Fe-4S] cluster: Cys-71, Cys-75, and Cys-78. Residues Cys-115, Cys-146, Cys-206, and Arg-278 each coordinate [2Fe-2S] cluster.

The protein belongs to the radical SAM superfamily. Biotin synthase family. Homodimer. [4Fe-4S] cluster is required as a cofactor. It depends on [2Fe-2S] cluster as a cofactor.

It catalyses the reaction (4R,5S)-dethiobiotin + (sulfur carrier)-SH + 2 reduced [2Fe-2S]-[ferredoxin] + 2 S-adenosyl-L-methionine = (sulfur carrier)-H + biotin + 2 5'-deoxyadenosine + 2 L-methionine + 2 oxidized [2Fe-2S]-[ferredoxin]. Its pathway is cofactor biosynthesis; biotin biosynthesis; biotin from 7,8-diaminononanoate: step 2/2. In terms of biological role, catalyzes the conversion of dethiobiotin (DTB) to biotin by the insertion of a sulfur atom into dethiobiotin via a radical-based mechanism. This is Biotin synthase from Burkholderia lata (strain ATCC 17760 / DSM 23089 / LMG 22485 / NCIMB 9086 / R18194 / 383).